Reading from the N-terminus, the 360-residue chain is MSLTRLNIEAFRNIQSAQLIPAPGINLIYGQNGSGKTSILEAIYFLGMGRSFRSHLSQRVINNDDDKLTLFATLNLARGDSKIGLRRFRSGETEVRIDGEKVKRLSTLAETLPIQVITPESFSLLFEGPKSRRQFIDWGAFHADPQFYGAWTNVRRVLKQRNQLLRNGSAYSNIQFWDQEFVRYAEQVTEIRNHYVDSLNELLKGIIGEFLPSVDVKVSFTRGWDSKTDFAELLENQYSRDLATGHTVSGPHKADLRLRVGTLPAQDALSRGQLKLLVCALRIAQGKLLKQQIDKHSIYLVDDLPSELDAQHRQLLLKQLTDTGAQVFVTAIDPAAIVDSLHTPPSRMFHVEQGRVTVIE.

An ATP-binding site is contributed by 30-37 (GQNGSGKT).

The protein belongs to the RecF family.

It is found in the cytoplasm. In terms of biological role, the RecF protein is involved in DNA metabolism; it is required for DNA replication and normal SOS inducibility. RecF binds preferentially to single-stranded, linear DNA. It also seems to bind ATP. The protein is DNA replication and repair protein RecF of Shewanella baltica (strain OS155 / ATCC BAA-1091).